Reading from the N-terminus, the 70-residue chain is UPF0519 protein D (70 aa).

It belongs to the UPF0519 family.

This Dictyostelium discoideum (Social amoeba) protein is UPF0519 protein D.